A 249-amino-acid polypeptide reads, in one-letter code: Expansin-A19 (249 aa).

The first 21 residues, 1–21, serve as a signal peptide directing secretion; sequence MGNIFLQLLAVVALCIAPARS. Residues 41 to 154 form the Expansin-like EG45 domain; that stretch reads GGACGYGNLY…QQVKCWRYGG (114 aa). N-linked (GlcNAc...) asparagine glycosylation is found at Asn-116 and Asn-216. The Expansin-like CBD domain maps to 164 to 243; sequence YFELVLVTNM…GWSFGQTFST (80 aa).

It belongs to the expansin family. Expansin A subfamily.

The protein resides in the secreted. It localises to the cell wall. It is found in the membrane. May cause loosening and extension of plant cell walls by disrupting non-covalent bonding between cellulose microfibrils and matrix glucans. No enzymatic activity has been found. May be required for rapid internodal elongation in deepwater rice during submergence. The polypeptide is Expansin-A19 (EXPA19) (Oryza sativa subsp. japonica (Rice)).